A 102-amino-acid polypeptide reads, in one-letter code: Acid shock protein (102 aa).

Positions 1-21 are cleaved as a signal peptide; sequence MKKVLGLVVAAAMGLSSAAFA. The segment covering 22 to 41 has biased composition (low complexity); the sequence is AETATTPAPTATTTKAAPAK. A propeptide spanning residues 22-58 is cleaved from the precursor; sequence AETATTPAPTATTTKAAPAKTTHHKKQHKAAPAQKAQ. The interval 22-102 is disordered; it reads AETATTPAPT…PAKPAAQPAA (81 aa). A compositionally biased stretch (basic residues) spans 80–90; that stretch reads AAKKHAGKHSH. Residues 91 to 102 show a composition bias toward low complexity; it reads QQPAKPAAQPAA.

This sequence belongs to the Asr family. Proteolytic processing gives rise to the active protein.

Its subcellular location is the periplasm. In terms of biological role, required for growth and/or survival at acidic conditions. This Escherichia coli (strain SE11) protein is Acid shock protein.